The chain runs to 205 residues: Mitotic spindle assembly checkpoint protein MAD2A (205 aa).

An N-acetylalanine modification is found at A2. A phosphoserine mark is found at S6, S130, S170, S178, S185, and S195. One can recognise an HORMA domain in the interval 14–197 (RGSAEIVAEF…TTIHKVNSMV (184 aa)). Positions 195–205 (SMVAYKIPVND) are required for assuming the closed conformation and for interaction with CDC20.

The protein belongs to the MAD2 family. Monomer and homodimer. Heterodimerizes with MAD2L1 in order to form a tetrameric MAD1L1-MAD2L1 core complex. In the closed and open conformation, interacts with MAD1L1. Formation of a heterotetrameric core complex containing two molecules each of MAD1L1 and of MAD2L1 promotes binding of another molecule of MAD2L1 to each MAD2L1, resulting in a heterohexamer. Interacts with MAD2L1BP. Interacts with ADAM17/TACE. Interacts with CDC20. Dimeric MAD2L1 in the closed conformation interacts with CDC20. Monomeric MAD2L1 in the open conformation does not interact with CDC20. CDC20 competes with MAD1L1 for MAD2L1 binding. In the closed conformation, interacts with BUB1B. Interacts with TTK. Interacts with TPR. Binds to UBD (via ubiquitin-like 1 domain) during mitosis. Interacts with isoform 1 and isoform 2 of NEK2. Interacts with HSF1; this interaction occurs in mitosis. Interacts with isoform 3 of MAD1L1; this interaction leads to the cytoplasmic sequestration of MAD2L1. Post-translationally, phosphorylated on multiple serine residues. The level of phosphorylation varies during the cell cycle and is highest during mitosis. Phosphorylation abolishes interaction with MAD1L1 and reduces interaction with CDC20. Phosphorylated by NEK2.

Its subcellular location is the nucleus. The protein localises to the chromosome. It localises to the centromere. It is found in the kinetochore. The protein resides in the cytoplasm. Its subcellular location is the cytoskeleton. The protein localises to the spindle pole. In terms of biological role, component of the spindle-assembly checkpoint that prevents the onset of anaphase until all chromosomes are properly aligned at the metaphase plate. In the closed conformation (C-MAD2) forms a heterotetrameric complex with MAD1L1 at unattached kinetochores during prometaphase, the complex recruits open conformation molecules of MAD2L1 (O-MAD2) and then promotes the conversion of O-MAD2 to C-MAD2. Required for the execution of the mitotic checkpoint which monitors the process of kinetochore-spindle attachment and inhibits the activity of the anaphase promoting complex by sequestering CDC20 until all chromosomes are aligned at the metaphase plate. The chain is Mitotic spindle assembly checkpoint protein MAD2A (MAD2L1) from Homo sapiens (Human).